The primary structure comprises 452 residues: GTPase Der (452 aa).

EngA-type G domains lie at Pro-4–Ala-169 and Ile-177–Arg-352. Residues Gly-10–Ser-17, Asp-57–Leu-61, Asn-120–Glu-123, Gly-183–Ser-190, Asp-230–Ile-234, and Asn-295–Asp-298 each bind GTP. Residues Arg-353–Pro-438 enclose the KH-like domain.

It belongs to the TRAFAC class TrmE-Era-EngA-EngB-Septin-like GTPase superfamily. EngA (Der) GTPase family. Associates with the 50S ribosomal subunit.

Functionally, GTPase that plays an essential role in the late steps of ribosome biogenesis. In Microcystis aeruginosa (strain NIES-843 / IAM M-2473), this protein is GTPase Der.